A 554-amino-acid polypeptide reads, in one-letter code: Valerianol synthase TPS1G (554 aa).

Residues aspartate 307 and aspartate 311 each contribute to the Mg(2+) site. A DDXXD motif motif is present at residues 326–330; the sequence is VQRWD. Mg(2+)-binding residues include aspartate 452, serine 456, and glutamate 460.

It belongs to the terpene synthase family. The cofactor is Mg(2+).

It carries out the reaction (2E,6E)-farnesyl diphosphate + H2O = valerianol + diphosphate. It functions in the pathway secondary metabolite biosynthesis; terpenoid biosynthesis. Terpene synthase that catalyzes the biosynthesis of the terpene valerianol, which is a volatile compound of floral scent. The sequence is that of Valerianol synthase TPS1G from Camellia hiemalis (Camellia).